Here is a 260-residue protein sequence, read N- to C-terminus: Thiazole synthase (260 aa).

Lysine 96 (schiff-base intermediate with DXP) is an active-site residue. 1-deoxy-D-xylulose 5-phosphate-binding positions include glycine 157, alanine 183–glycine 184, and alanine 205–serine 206.

The protein belongs to the ThiG family. In terms of assembly, homotetramer. Forms heterodimers with either ThiH or ThiS.

The protein localises to the cytoplasm. The catalysed reaction is [ThiS sulfur-carrier protein]-C-terminal-Gly-aminoethanethioate + 2-iminoacetate + 1-deoxy-D-xylulose 5-phosphate = [ThiS sulfur-carrier protein]-C-terminal Gly-Gly + 2-[(2R,5Z)-2-carboxy-4-methylthiazol-5(2H)-ylidene]ethyl phosphate + 2 H2O + H(+). It functions in the pathway cofactor biosynthesis; thiamine diphosphate biosynthesis. Functionally, catalyzes the rearrangement of 1-deoxy-D-xylulose 5-phosphate (DXP) to produce the thiazole phosphate moiety of thiamine. Sulfur is provided by the thiocarboxylate moiety of the carrier protein ThiS. In vitro, sulfur can be provided by H(2)S. This Corynebacterium glutamicum (strain ATCC 13032 / DSM 20300 / JCM 1318 / BCRC 11384 / CCUG 27702 / LMG 3730 / NBRC 12168 / NCIMB 10025 / NRRL B-2784 / 534) protein is Thiazole synthase.